The chain runs to 557 residues: Probable phenylalanine--tRNA ligase beta subunit (557 aa).

One can recognise a B5 domain in the interval 276-352 (MHNRSYVMGL…IAHGFNNFRR (77 aa)). Positions 330, 336, 339, and 340 each coordinate Mg(2+).

It belongs to the phenylalanyl-tRNA synthetase beta subunit family. Type 2 subfamily. As to quaternary structure, tetramer of two alpha and two beta subunits. Requires Mg(2+) as cofactor.

It localises to the cytoplasm. It catalyses the reaction tRNA(Phe) + L-phenylalanine + ATP = L-phenylalanyl-tRNA(Phe) + AMP + diphosphate + H(+). This is Probable phenylalanine--tRNA ligase beta subunit from Encephalitozoon cuniculi (strain GB-M1) (Microsporidian parasite).